Reading from the N-terminus, the 428-residue chain is Elongation factor 1-alpha (428 aa).

Residues 5-215 (KPHINIVFIG…ALDQMPEPPK (211 aa)) form the tr-type G domain. Residues 14 to 21 (GHVDHGKS) form a G1 region. GTP is bound at residue 14-21 (GHVDHGKS). Ser-21 lines the Mg(2+) pocket. A G2 region spans residues 68–72 (GITID). A G3 region spans residues 89 to 92 (DAPG). GTP contacts are provided by residues 89 to 93 (DAPGH) and 144 to 147 (NKMD). The G4 stretch occupies residues 144 to 147 (NKMD). Positions 181-183 (SAW) are G5.

It belongs to the TRAFAC class translation factor GTPase superfamily. Classic translation factor GTPase family. EF-Tu/EF-1A subfamily.

It localises to the cytoplasm. It carries out the reaction GTP + H2O = GDP + phosphate + H(+). Functionally, GTP hydrolase that promotes the GTP-dependent binding of aminoacyl-tRNA to the A-site of ribosomes during protein biosynthesis. In Thermococcus celer, this protein is Elongation factor 1-alpha.